Here is a 382-residue protein sequence, read N- to C-terminus: V-type proton ATPase subunit C 1 (382 aa).

Thr-2 is modified (N-acetylthreonine).

This sequence belongs to the V-ATPase C subunit family. As to quaternary structure, V-ATPase is a heteromultimeric enzyme made up of two complexes: the ATP-hydrolytic V1 complex and the proton translocation V0 complex. The V1 complex consists of three catalytic AB heterodimers that form a heterohexamer, three peripheral stalks each consisting of EG heterodimers, one central rotor including subunits D and F, and the regulatory subunits C and H. The proton translocation complex V0 consists of the proton transport subunit a, a ring of proteolipid subunits c9c'', rotary subunit d, subunits e and f, and two accessory subunits.

Its function is as follows. Subunit of the V1 complex of vacuolar(H+)-ATPase (V-ATPase), a multisubunit enzyme composed of a peripheral complex (V1) that hydrolyzes ATP and a membrane integral complex (V0) that translocates protons. V-ATPase is responsible for acidifying and maintaining the pH of intracellular compartments and in some cell types, is targeted to the plasma membrane, where it is responsible for acidifying the extracellular environment. Subunit C is necessary for the assembly of the catalytic sector of the enzyme and is likely to have a specific function in its catalytic activity. The polypeptide is V-type proton ATPase subunit C 1 (atp6v1c1) (Xenopus laevis (African clawed frog)).